Reading from the N-terminus, the 86-residue chain is Toxin CngtIV (86 aa).

The signal sequence occupies residues 1-19; it reads MNSLLIITACLVLIGTVWA. Positions 20–84 constitute an LCN-type CS-alpha/beta domain; sequence KDGYLVDVKG…TWPLPNKRCG (65 aa). 4 disulfide bridges follow: Cys-30–Cys-83, Cys-34–Cys-59, Cys-43–Cys-64, and Cys-47–Cys-66.

Belongs to the long (4 C-C) scorpion toxin superfamily. Sodium channel inhibitor family. Beta subfamily. In terms of tissue distribution, expressed by the venom gland.

It localises to the secreted. Functionally, beta toxins bind voltage-independently at site-4 of sodium channels (Nav) and shift the voltage of activation toward more negative potentials thereby affecting sodium channel activation and promoting spontaneous and repetitive firing. The sequence is that of Toxin CngtIV from Centruroides noxius (Mexican scorpion).